The following is a 92-amino-acid chain: C-C motif chemokine 4 (92 aa).

The first 23 residues, 1-23, serve as a signal peptide directing secretion; that stretch reads MKLCVTVLSLLMLVAAFCSPALS. Disulfide bonds link Cys34/Cys58 and Cys35/Cys74.

This sequence belongs to the intercrine beta (chemokine CC) family. In terms of assembly, homodimer and heterodimer of MIP-1-alpha(4-69) and MIP-1-beta(3-69). Post-translationally, N-terminal processed form MIP-1-beta(3-69) is produced by proteolytic cleavage after secretion from peripheral blood lymphocytes.

The protein resides in the secreted. Its function is as follows. Monokine with inflammatory and chemokinetic properties. Binds to CCR5. One of the major HIV-suppressive factors produced by CD8+ T-cells. Recombinant MIP-1-beta induces a dose-dependent inhibition of different strains of HIV-1, HIV-2, and simian immunodeficiency virus (SIV). The processed form MIP-1-beta(3-69) retains the abilities to induce down-modulation of surface expression of the chemokine receptor CCR5 and to inhibit the CCR5-mediated entry of HIV-1 in T-cells. MIP-1-beta(3-69) is also a ligand for CCR1 and CCR2 isoform B. This Homo sapiens (Human) protein is C-C motif chemokine 4 (CCL4).